The sequence spans 643 residues: Type VI secretion system spike protein VgrG1a (643 aa).

It belongs to the VgrG protein family. As to quaternary structure, forms homotrimers. Part of the type VI secretion system (T6SS). Interacts with EagT6 and Tse6; these interactions are required for Tse6 loading onto VgrG1. Interacts with Hcp1.

It localises to the secreted. Part of the H1 type VI secretion system (H1-T6SS) specialized secretion system, which delivers several virulence factors in both prokaryotic and eukaryotic cells during infection. Forms the spike at the tip of the elongating tube formed by haemolysin co-regulated protein 1/Hcp1. Allows the delivery of the Tse6 toxin to target cells where it exerts its toxicity. The sequence is that of Type VI secretion system spike protein VgrG1a from Pseudomonas aeruginosa (strain ATCC 15692 / DSM 22644 / CIP 104116 / JCM 14847 / LMG 12228 / 1C / PRS 101 / PAO1).